A 326-amino-acid chain; its full sequence is tRNA uridine(34) hydroxylase (326 aa).

The region spanning 123 to 217 is the Rhodanese domain; that stretch reads SDPDVILVDT…YLEEVKQEES (95 aa). The active-site Cysteine persulfide intermediate is Cys177.

Belongs to the TrhO family.

The catalysed reaction is uridine(34) in tRNA + AH2 + O2 = 5-hydroxyuridine(34) in tRNA + A + H2O. In terms of biological role, catalyzes oxygen-dependent 5-hydroxyuridine (ho5U) modification at position 34 in tRNAs. This chain is tRNA uridine(34) hydroxylase, found in Shewanella denitrificans (strain OS217 / ATCC BAA-1090 / DSM 15013).